The following is an 82-amino-acid chain: U-actitoxin-Avd3k (82 aa).

The N-terminal stretch at 1-16 (MVFLLCFFLVADVSYG) is a signal peptide. The BPTI/Kunitz inhibitor domain maps to 21 to 71 (CLLPMDVGRCRARHPRYYYNSSSKRCEKFIYGGCRGNANNFITKKECEKVC). Disulfide bonds link Cys21/Cys71, Cys30/Cys54, and Cys46/Cys67. Positions 76–82 (RDSPKEN) are excised as a propeptide.

The protein belongs to the venom Kunitz-type family. Sea anemone type 2 potassium channel toxin subfamily.

It localises to the secreted. Its subcellular location is the nematocyst. Dual-function toxin that inhibits both the serine protease trypsin and voltage-gated potassium channels Kv1.2/KCNA2. The sequence is that of U-actitoxin-Avd3k from Anemonia viridis (Snakelocks anemone).